The chain runs to 372 residues: MNLSEIAYRRVVVKLGTSVLTSGSKQLDKAHMVELARQMAALMRSGVEVVLCTSGAIAAGREHLQYPALPDTMANKQLLAAVGQSQLILAWAQLFSIYGLHVGQLLLTRADLHDRERYLNARDTLNALLANNIIPIINENDAVATNEIKVGDNDNLSARAALLCDADLLILLTDQKGLFDADPRTNPNAKLISQVEKIDDSLRLLAGGSVSGLGTGGMSTKLEAADIARRAGIEVVIASGHHPDVIKKVVAKESIGTHFSAIENPLESRKQWILAGPAAQGSLVLDAGAVKAVTEKGRSLLSKGIIGVKGEFERGATLQLVDQNGKIIARGITRYCGEALGLIAGKHSDEIESVLGYDYGDAIVHRNDMVVL.

K14 is a binding site for ATP. Residues S54, D141, and N153 each coordinate substrate. ATP contacts are provided by residues 173–174 and 215–221; these read TD and TGGMSTK. One can recognise a PUA domain in the interval 280–358; the sequence is QGSLVLDAGA…DEIESVLGYD (79 aa).

It belongs to the glutamate 5-kinase family.

The protein resides in the cytoplasm. It carries out the reaction L-glutamate + ATP = L-glutamyl 5-phosphate + ADP. The protein operates within amino-acid biosynthesis; L-proline biosynthesis; L-glutamate 5-semialdehyde from L-glutamate: step 1/2. In terms of biological role, catalyzes the transfer of a phosphate group to glutamate to form L-glutamate 5-phosphate. The sequence is that of Glutamate 5-kinase from Shewanella oneidensis (strain ATCC 700550 / JCM 31522 / CIP 106686 / LMG 19005 / NCIMB 14063 / MR-1).